The sequence spans 154 residues: MIRLEQILTPGRSLVNVPGGSKKRVLEQIANLVARELPEFDAQTIFENLVAREKLGSTGFGNGIAIPHCRLSGCQSPISAVLHLDAPVDFDALDGAPVDLLFVLLVPEAATEEHLELLRQIAAMLDRADVRDRLRSAPTAEALYQIVVDVQNGQ.

The PTS EIIA type-2 domain maps to 6-150; the sequence is QILTPGRSLV…EALYQIVVDV (145 aa). The active-site Tele-phosphohistidine intermediate is the His-68.

Its subcellular location is the cytoplasm. Its function is as follows. Seems to have a role in regulating nitrogen assimilation. This chain is Nitrogen regulatory protein (ptsN), found in Pseudomonas aeruginosa (strain ATCC 15692 / DSM 22644 / CIP 104116 / JCM 14847 / LMG 12228 / 1C / PRS 101 / PAO1).